Reading from the N-terminus, the 1525-residue chain is Multidrug resistance protein mrp-7 (1525 aa).

Over 1 to 24 (MLSSFCGDGHPFSTGLPNVSICAQ) the chain is Extracellular. Asn-18 carries N-linked (GlcNAc...) asparagine glycosylation. Residues 25-45 (HTVLVWVPAAFFLLTLPFLSA) traverse the membrane as a helical segment. The Cytoplasmic portion of the chain corresponds to 46 to 66 (QCHLTAQRFARLPFSAHFIIK). The helical transmembrane segment at 67 to 87 (LLLVAFLAANSLATWCYVLFS) threads the bilayer. At 88-94 (KNSYAAA) the chain is on the extracellular side. The helical transmembrane segment at 95–115 (YYVYPGLWVLVWTGTFLVHLI) threads the bilayer. Residues 116–118 (RLR) are Cytoplasmic-facing. The chain crosses the membrane as a helical span at residues 119 to 139 (CGLVSSGIQHVTSLIFLLCGA). The Extracellular portion of the chain corresponds to 140–165 (PEFYQWIRMENSNSFPNDLTTTDSAQ). Residues 166 to 186 (FLSIAYLSWYSALILYTFSLC) form a helical membrane-spanning segment. At 187 to 346 (FADPRGAKTD…APFWKGMALS (160 aa)) the chain is on the cytoplasmic side. The ABC transmembrane type-1 1 domain maps to 305–587 (LLASTLKFVS…IALLINQAVQ (283 aa)). Residues 347–367 (ILMFSVSELRSLILNGYFYIM) form a helical membrane-spanning segment. At 368-434 (FRMGTKIQTS…SCPYQITFAL (67 aa)) the chain is on the extracellular side. The helical transmembrane segment at 435-455 (VYLFITLGYSALPGVVIMVIF) threads the bilayer. Residues 456–535 (VPMNIISSMI…NILDSFNTAS (80 aa)) lie on the Cytoplasmic side of the membrane. Residues 536–556 (PFLVALFSFGTFVLSNPSHLL) traverse the membrane as a helical segment. Residues 557 to 561 (TPQIA) lie on the Extracellular side of the membrane. A helical transmembrane segment spans residues 562–582 (FVSLALFNQLRSPMTMIALLI). At 583–953 (NQAVQAVVSN…ATYQLYVKAA (371 aa)) the chain is on the cytoplasmic side. The 228-residue stretch at 622–849 (VRVENLTASW…RGLFFDFMEE (228 aa)) folds into the ABC transporter 1 domain. ATP is bound at residue 659 to 666 (GKVGSGKS). The interval 900–925 (ELTTQISTMSSPEKPPTGTSPAAATE) is disordered. The helical transmembrane segment at 954–974 (GYLLSIAFIGFFIVYMTLQIL) threads the bilayer. Positions 959–1245 (IAFIGFFIVY…AVRQVSEIEA (287 aa)) constitute an ABC transmembrane type-1 2 domain. The Extracellular portion of the chain corresponds to 975–1005 (RSFWLSAWSDEYDPDSPSAHPMAKGWRLGVY). A helical membrane pass occupies residues 1006–1026 (GALGFSETACFFVALLALVFV). Residues 1027–1068 (GQRASKNLHGPLIHNLMRSPMSFYDTTPLGRILNRCAKDIET) are Cytoplasmic-facing. A helical transmembrane segment spans residues 1069–1089 (IDMMLPMNFRYLVMCVLQVAF). Position 1090 (Thr-1090) is a topological domain, extracellular. The helical transmembrane segment at 1091–1111 (LIVIIISTPLFAVVILPLALI) threads the bilayer. Over 1112–1184 (YLIFLRYYVP…RYSSLVSNRW (73 aa)) the chain is Cytoplasmic. The chain crosses the membrane as a helical span at residues 1185 to 1205 (LAVRLEFVGNCIIFFAALFAV). The Extracellular segment spans residues 1206 to 1525 (LSKEFGWITS…ADAAEQDKHE (320 aa)). A glycan (N-linked (GlcNAc...) asparagine) is linked at Asn-1228. Residues 1282–1516 (VKFDGYSTRY…KNSAFAKMVA (235 aa)) form the ABC transporter 2 domain. 1316–1323 (GRTGAGKS) serves as a coordination point for ATP. Residues Asn-1358 and Asn-1418 are each glycosylated (N-linked (GlcNAc...) asparagine).

It belongs to the ABC transporter superfamily. ABCC family. Conjugate transporter (TC 3.A.1.208) subfamily. In terms of tissue distribution, expressed in head neurons, including the dopamine (DA) motor neuron, and other cells in the body.

Its subcellular location is the cell membrane. Negatively regulates cellular toxicity by mediating the export of environmental toxicants such as methylmercury out of the cell. Plays a role in inhibiting methylmercury-induced dopamine (DA) motor neuron degeneration. Not involved in Mn(2+)- or Al(3+)-associated toxicity. The protein is Multidrug resistance protein mrp-7 of Caenorhabditis elegans.